The primary structure comprises 82 residues: ATP synthase subunit c, chloroplastic (82 aa).

2 helical membrane-spanning segments follow: residues 3–23 and 57–77; these read PIISAASVIGAGLSIGLAAIG and LAFMEALTIYGLVVALALLFA.

It belongs to the ATPase C chain family. As to quaternary structure, F-type ATPases have 2 components, F(1) - the catalytic core - and F(0) - the membrane proton channel. F(1) has five subunits: alpha(3), beta(3), gamma(1), delta(1), epsilon(1). F(0) has four main subunits: a(1), b(1), b'(1) and c(10-14). The alpha and beta chains form an alternating ring which encloses part of the gamma chain. F(1) is attached to F(0) by a central stalk formed by the gamma and epsilon chains, while a peripheral stalk is formed by the delta, b and b' chains.

It is found in the plastid. It localises to the chloroplast thylakoid membrane. Its function is as follows. F(1)F(0) ATP synthase produces ATP from ADP in the presence of a proton or sodium gradient. F-type ATPases consist of two structural domains, F(1) containing the extramembraneous catalytic core and F(0) containing the membrane proton channel, linked together by a central stalk and a peripheral stalk. During catalysis, ATP synthesis in the catalytic domain of F(1) is coupled via a rotary mechanism of the central stalk subunits to proton translocation. Key component of the F(0) channel; it plays a direct role in translocation across the membrane. A homomeric c-ring of between 10-14 subunits forms the central stalk rotor element with the F(1) delta and epsilon subunits. This is ATP synthase subunit c, chloroplastic from Phaeodactylum tricornutum (strain CCAP 1055/1).